A 185-amino-acid polypeptide reads, in one-letter code: UPF0200 protein TK1334 (185 aa).

7–14 contacts ATP; sequence GMPGSGKS.

This sequence belongs to the UPF0200 family.

The sequence is that of UPF0200 protein TK1334 from Thermococcus kodakarensis (strain ATCC BAA-918 / JCM 12380 / KOD1) (Pyrococcus kodakaraensis (strain KOD1)).